Here is a 1152-residue protein sequence, read N- to C-terminus: Autotransporter adhesin BpaC (1152 aa).

Residues 1 to 71 form the signal peptide; it reads MNRIFKSIWC…PFAEEAMAAN (71 aa). The segment at 72 to 1061 is surface exposed passenger domain; the sequence is NAGVCLTYNG…VGQLNSAVSG (990 aa). Disordered regions lie at residues 420-886 and 900-949; these read GLQG…AGAT and TATG…ESAA. Residues 427 to 442 show a composition bias toward polar residues; sequence ANTGTASGDNSTASGD. A compositionally biased stretch (low complexity) spans 443-504; it reads NATASGTNST…ANGTNSTASG (62 aa). Over residues 505-519 the composition is skewed to polar residues; the sequence is DNSTASGTNASATGE. Low complexity predominate over residues 520 to 588; that stretch reads NSTATGTDST…ANGTNSTASG (69 aa). Residues 589-603 show a composition bias toward polar residues; it reads DNSTASGTNASATGE. Over residues 604 to 630 the composition is skewed to low complexity; it reads NSTATGTDSTASGSNSTANGTNSTASG. Residues 631 to 645 are compositionally biased toward polar residues; the sequence is DNSTASGTNASATGE. Residues 646 to 672 show a composition bias toward low complexity; sequence NSTATGTDSTASGSNSTANGTNSTASG. Residues 673-687 show a composition bias toward polar residues; the sequence is DNSTASGTNASATGE. Residues 688–714 are compositionally biased toward low complexity; sequence NSTATGTDSTASGSNSTANGTNSTASG. The segment covering 715-729 has biased composition (polar residues); sequence DNSTASGTNASATGE. Over residues 730 to 756 the composition is skewed to low complexity; that stretch reads NSTATGTDSTASGSNSTANGANSTASG. Over residues 757–771 the composition is skewed to polar residues; it reads DNSTASGTNASATGE. 2 stretches are compositionally biased toward low complexity: residues 772–840 and 848–886; these read NSTA…TASG and TNASATGENSTATGTASTASGSNSTANGANSTASGAGAT. An outer membrane translocation of the passenger domain region spans residues 1062-1099; sequence IRNQMDGMQGQIDTLARDAYSGIAAATALTMIPDVDPG. Residues 1100–1152 are translocator domain; that stretch reads KTLAVGIGTANFKGYQASALGATARITQNLKVKTGVSYSGSNYVWGAGMSYQW.

The protein belongs to the autotransporter-2 (AT-2) (TC 1.B.40) family. In terms of assembly, homotrimer.

Its subcellular location is the cell surface. The protein resides in the cell outer membrane. Its function is as follows. Involved in virulence. Mediates adherence to human respiratory epithelial cells. The sequence is that of Autotransporter adhesin BpaC from Burkholderia pseudomallei (strain 1026b).